The chain runs to 194 residues: Protein GrpE 2 (194 aa).

The segment covering 1–17 has biased composition (basic and acidic residues); it reads MNDIDKHKKETQTESKN. A disordered region spans residues 1–29; sequence MNDIDKHKKETQTESKNDLNNTTITQNNV. The span at 18 to 29 shows a compositional bias: polar residues; that stretch reads DLNNTTITQNNV.

Belongs to the GrpE family. In terms of assembly, homodimer.

The protein resides in the cytoplasm. Participates actively in the response to hyperosmotic and heat shock by preventing the aggregation of stress-denatured proteins, in association with DnaK and GrpE. It is the nucleotide exchange factor for DnaK and may function as a thermosensor. Unfolded proteins bind initially to DnaJ; upon interaction with the DnaJ-bound protein, DnaK hydrolyzes its bound ATP, resulting in the formation of a stable complex. GrpE releases ADP from DnaK; ATP binding to DnaK triggers the release of the substrate protein, thus completing the reaction cycle. Several rounds of ATP-dependent interactions between DnaJ, DnaK and GrpE are required for fully efficient folding. The sequence is that of Protein GrpE 2 from Buchnera aphidicola subsp. Baizongia pistaciae (strain Bp).